An 845-amino-acid polypeptide reads, in one-letter code: Protein translocase subunit SecA (845 aa).

ATP contacts are provided by residues glutamine 85, 103 to 107, and aspartate 492; that span reads GEGKT. Residues 787 to 845 are disordered; the sequence is REQVAQGQAEHPETEQDAAAQSNTSAKRQPVRVDKKVGRNDLCPCGSGKKFKNCHGRNA. Residues cysteine 829, cysteine 831, cysteine 840, and histidine 841 each contribute to the Zn(2+) site. Basic residues predominate over residues 835–845; it reads KKFKNCHGRNA.

The protein belongs to the SecA family. Monomer and homodimer. Part of the essential Sec protein translocation apparatus which comprises SecA, SecYEG and auxiliary proteins SecDF. Other proteins may also be involved. Requires Zn(2+) as cofactor.

It is found in the cell membrane. The protein resides in the cytoplasm. The catalysed reaction is ATP + H2O + cellular proteinSide 1 = ADP + phosphate + cellular proteinSide 2.. Its function is as follows. Part of the Sec protein translocase complex. Interacts with the SecYEG preprotein conducting channel. Has a central role in coupling the hydrolysis of ATP to the transfer of proteins into and across the cell membrane, serving as an ATP-driven molecular motor driving the stepwise translocation of polypeptide chains across the membrane. The sequence is that of Protein translocase subunit SecA from Enterococcus faecalis (strain ATCC 700802 / V583).